A 497-amino-acid polypeptide reads, in one-letter code: Bifunctional protein GlmU (497 aa).

Residues 1–241 are pyrophosphorylase; that stretch reads MSPETIGPAA…RWQVEGANDR (241 aa). UDP-N-acetyl-alpha-D-glucosamine contacts are provided by residues 14 to 17, K28, Q81, 86 to 87, 112 to 114, G151, E166, N181, and N239; these read LAAG, GT, and YGD. D114 serves as a coordination point for Mg(2+). N239 serves as a coordination point for Mg(2+). Positions 242–262 are linker; sequence IQLSALAAEHNRRIIESWMRA. The interval 263 to 497 is N-acetyltransferase; that stretch reads GVTVVDPATT…QATIEEGKQA (235 aa). UDP-N-acetyl-alpha-D-glucosamine is bound by residues R344 and K362. The Proton acceptor role is filled by H374. Residues Y377 and N388 each contribute to the UDP-N-acetyl-alpha-D-glucosamine site. Acetyl-CoA is bound by residues 397–398, S416, and A434; that span reads NY.

The protein in the N-terminal section; belongs to the N-acetylglucosamine-1-phosphate uridyltransferase family. In the C-terminal section; belongs to the transferase hexapeptide repeat family. Homotrimer. The cofactor is Mg(2+).

It localises to the cytoplasm. It catalyses the reaction alpha-D-glucosamine 1-phosphate + acetyl-CoA = N-acetyl-alpha-D-glucosamine 1-phosphate + CoA + H(+). It carries out the reaction N-acetyl-alpha-D-glucosamine 1-phosphate + UTP + H(+) = UDP-N-acetyl-alpha-D-glucosamine + diphosphate. It participates in nucleotide-sugar biosynthesis; UDP-N-acetyl-alpha-D-glucosamine biosynthesis; N-acetyl-alpha-D-glucosamine 1-phosphate from alpha-D-glucosamine 6-phosphate (route II): step 2/2. Its pathway is nucleotide-sugar biosynthesis; UDP-N-acetyl-alpha-D-glucosamine biosynthesis; UDP-N-acetyl-alpha-D-glucosamine from N-acetyl-alpha-D-glucosamine 1-phosphate: step 1/1. The protein operates within bacterial outer membrane biogenesis; LPS lipid A biosynthesis. Its function is as follows. Catalyzes the last two sequential reactions in the de novo biosynthetic pathway for UDP-N-acetylglucosamine (UDP-GlcNAc). The C-terminal domain catalyzes the transfer of acetyl group from acetyl coenzyme A to glucosamine-1-phosphate (GlcN-1-P) to produce N-acetylglucosamine-1-phosphate (GlcNAc-1-P), which is converted into UDP-GlcNAc by the transfer of uridine 5-monophosphate (from uridine 5-triphosphate), a reaction catalyzed by the N-terminal domain. The chain is Bifunctional protein GlmU from Paenarthrobacter aurescens (strain TC1).